The primary structure comprises 687 residues: RNA-binding protein VTS1 (687 aa).

The segment covering 1 to 10 has biased composition (basic residues); it reads MASHTLRPHR. Disordered stretches follow at residues 1–115, 248–341, and 526–598; these read MASH…TPEA, AAAK…PGIG, and SPFN…AGVA. Positions 29–41 are enriched in polar residues; the sequence is TRQSLGPPTSGNS. The segment covering 52–68 has biased composition (low complexity); the sequence is GLASPSSPSQPRHVSSS. The segment covering 287–301 has biased composition (polar residues); sequence GLESNMSGRSRSKSP. The segment covering 305 to 324 has biased composition (basic and acidic residues); the sequence is PRPKSTDFSGKPRESLRRES. Polar residues predominate over residues 526–539; sequence SPFNASAPSLQPGL. The span at 550-566 shows a compositional bias: low complexity; it reads QSSHLNQHYNQHQQQHQ. Over residues 585-597 the composition is skewed to gly residues; sequence QTGGGGAGGGAGV. An SAM domain is found at 606–667; that stretch reads KVLEDVPNWL…LKVFYNVRTK (62 aa).

Belongs to the VTS1 family. Monomer. Binds to RNA.

The protein localises to the cytoplasm. It localises to the cytosol. The protein resides in the P-body. Functionally, RNA-binding protein involved in post-transcriptional regulation through transcript degradation. This is RNA-binding protein VTS1 from Cryptococcus neoformans var. grubii serotype A (strain H99 / ATCC 208821 / CBS 10515 / FGSC 9487) (Filobasidiella neoformans var. grubii).